Consider the following 363-residue polypeptide: MISARFSGRQGDFTLDAAFDVPGQGVTALFGPSGCGKTTVLRCMAGLTRLPGGHLVVNGVTWQEGRQITPPHRRAVGYVFQEASLFTHLSVRENLVYGLRRARGPLRISEAEVTQLLGIDPLLRRPTATLSGGERQRVAIGRALLSQPELLLMDEPLSALDRISRDEILPYLERLHASLQMPVILVSHDLSEVERLADTLVLMEAGRVRAAGPIAAMQADPNLPLIHRPDLAAVIEGVVIALDPAYGLSTLQVPGGRIVVPGNLGPIGARRRLRVPATDVSLGRHAPTDTTILNALPAVILGAEAAEGYQITVRLALGASGEGASLLARVSRKSFDLLGFQPGEQVVARLKAMALSAPAQTGG.

Residues 1–230 (MISARFSGRQ…PNLPLIHRPD (230 aa)) enclose the ABC transporter domain. Residue 31 to 38 (GPSGCGKT) participates in ATP binding. The 71-residue stretch at 289–359 (DTTILNALPA…LKAMALSAPA (71 aa)) folds into the Mop domain.

Belongs to the ABC transporter superfamily. Molybdate importer (TC 3.A.1.8) family. As to quaternary structure, the complex is composed of two ATP-binding proteins (ModC), two transmembrane proteins (ModB) and a solute-binding protein (ModA).

The protein localises to the cell inner membrane. The enzyme catalyses molybdate(out) + ATP + H2O = molybdate(in) + ADP + phosphate + H(+). In terms of biological role, part of the ABC transporter complex ModABC involved in molybdenum import. Responsible for energy coupling to the transport system. In Rhodobacter capsulatus (Rhodopseudomonas capsulata), this protein is Molybdenum import ATP-binding protein ModC.